We begin with the raw amino-acid sequence, 69 residues long: Guanine nucleotide-binding protein G(I)/G(S)/G(O) subunit gamma-T2 (69 aa).

The tract at residues 47–69 (DPLLKGIPEDKNPFKEKGGCMIS) is disordered. The span at 53–69 (IPEDKNPFKEKGGCMIS) shows a compositional bias: basic and acidic residues. C66 carries the cysteine methyl ester modification. C66 carries S-farnesyl cysteine lipidation. Positions 67–69 (MIS) are cleaved as a propeptide — removed in mature form.

It belongs to the G protein gamma family. In terms of assembly, g proteins are composed of 3 units, alpha, beta and gamma.

The protein localises to the cell membrane. In terms of biological role, guanine nucleotide-binding proteins (G proteins) are involved as a modulator or transducer in various transmembrane signaling systems. The beta and gamma chains are required for the GTPase activity, for replacement of GDP by GTP, and for G protein-effector interaction. In Canis lupus familiaris (Dog), this protein is Guanine nucleotide-binding protein G(I)/G(S)/G(O) subunit gamma-T2 (GNGT2).